The chain runs to 333 residues: Holliday junction branch migration complex subunit RuvB (333 aa).

Positions 1 to 182 are large ATPase domain (RuvB-L); the sequence is MDERLLSGES…FGVLSRLEYY (182 aa). ATP is bound by residues L21, R22, G63, K66, T67, T68, 129 to 131, R172, Y182, and R219; that span reads EDF. Residue T67 coordinates Mg(2+). The small ATPAse domain (RuvB-S) stretch occupies residues 183-253; sequence TVDQLSEIVE…ITQMALELLQ (71 aa). Residues 256–333 are head domain (RuvB-H); sequence KLGLDHIDHK…EHFGMEMPKV (78 aa). Residues R311 and R316 each contribute to the DNA site.

This sequence belongs to the RuvB family. Homohexamer. Forms an RuvA(8)-RuvB(12)-Holliday junction (HJ) complex. HJ DNA is sandwiched between 2 RuvA tetramers; dsDNA enters through RuvA and exits via RuvB. An RuvB hexamer assembles on each DNA strand where it exits the tetramer. Each RuvB hexamer is contacted by two RuvA subunits (via domain III) on 2 adjacent RuvB subunits; this complex drives branch migration. In the full resolvosome a probable DNA-RuvA(4)-RuvB(12)-RuvC(2) complex forms which resolves the HJ.

Its subcellular location is the cytoplasm. It carries out the reaction ATP + H2O = ADP + phosphate + H(+). Functionally, the RuvA-RuvB-RuvC complex processes Holliday junction (HJ) DNA during genetic recombination and DNA repair, while the RuvA-RuvB complex plays an important role in the rescue of blocked DNA replication forks via replication fork reversal (RFR). RuvA specifically binds to HJ cruciform DNA, conferring on it an open structure. The RuvB hexamer acts as an ATP-dependent pump, pulling dsDNA into and through the RuvAB complex. RuvB forms 2 homohexamers on either side of HJ DNA bound by 1 or 2 RuvA tetramers; 4 subunits per hexamer contact DNA at a time. Coordinated motions by a converter formed by DNA-disengaged RuvB subunits stimulates ATP hydrolysis and nucleotide exchange. Immobilization of the converter enables RuvB to convert the ATP-contained energy into a lever motion, pulling 2 nucleotides of DNA out of the RuvA tetramer per ATP hydrolyzed, thus driving DNA branch migration. The RuvB motors rotate together with the DNA substrate, which together with the progressing nucleotide cycle form the mechanistic basis for DNA recombination by continuous HJ branch migration. Branch migration allows RuvC to scan DNA until it finds its consensus sequence, where it cleaves and resolves cruciform DNA. This is Holliday junction branch migration complex subunit RuvB from Bacillus cereus (strain ATCC 10987 / NRS 248).